Here is a 441-residue protein sequence, read N- to C-terminus: tRNA-2-methylthio-N(6)-dimethylallyladenosine synthase (441 aa).

In terms of domain architecture, MTTase N-terminal spans Lys5–Glu121. The [4Fe-4S] cluster site is built by Cys14, Cys50, Cys84, Cys159, Cys163, and Cys166. Positions Ala145–Ala375 constitute a Radical SAM core domain. Residues Arg378–His440 enclose the TRAM domain.

It belongs to the methylthiotransferase family. MiaB subfamily. Monomer. [4Fe-4S] cluster serves as cofactor.

The protein localises to the cytoplasm. The enzyme catalyses N(6)-dimethylallyladenosine(37) in tRNA + (sulfur carrier)-SH + AH2 + 2 S-adenosyl-L-methionine = 2-methylsulfanyl-N(6)-dimethylallyladenosine(37) in tRNA + (sulfur carrier)-H + 5'-deoxyadenosine + L-methionine + A + S-adenosyl-L-homocysteine + 2 H(+). In terms of biological role, catalyzes the methylthiolation of N6-(dimethylallyl)adenosine (i(6)A), leading to the formation of 2-methylthio-N6-(dimethylallyl)adenosine (ms(2)i(6)A) at position 37 in tRNAs that read codons beginning with uridine. The sequence is that of tRNA-2-methylthio-N(6)-dimethylallyladenosine synthase from Citrifermentans bemidjiense (strain ATCC BAA-1014 / DSM 16622 / JCM 12645 / Bem) (Geobacter bemidjiensis).